The following is a 173-amino-acid chain: Ribosome maturation factor RimM (173 aa).

The region spanning 92–165 (EGEFYHADLI…RVVIEMPGEI (74 aa)) is the PRC barrel domain.

It belongs to the RimM family. Binds ribosomal protein uS19.

The protein localises to the cytoplasm. Its function is as follows. An accessory protein needed during the final step in the assembly of 30S ribosomal subunit, possibly for assembly of the head region. Essential for efficient processing of 16S rRNA. May be needed both before and after RbfA during the maturation of 16S rRNA. It has affinity for free ribosomal 30S subunits but not for 70S ribosomes. The chain is Ribosome maturation factor RimM from Nitrobacter hamburgensis (strain DSM 10229 / NCIMB 13809 / X14).